A 179-amino-acid polypeptide reads, in one-letter code: Large ribosomal subunit protein uL10 (179 aa).

It belongs to the universal ribosomal protein uL10 family. Part of the ribosomal stalk of the 50S ribosomal subunit. The N-terminus interacts with L11 and the large rRNA to form the base of the stalk. The C-terminus forms an elongated spine to which L12 dimers bind in a sequential fashion forming a multimeric L10(L12)X complex.

Its function is as follows. Forms part of the ribosomal stalk, playing a central role in the interaction of the ribosome with GTP-bound translation factors. This chain is Large ribosomal subunit protein uL10, found in Thermotoga neapolitana (strain ATCC 49049 / DSM 4359 / NBRC 107923 / NS-E).